A 407-amino-acid polypeptide reads, in one-letter code: Probable tRNA sulfurtransferase (407 aa).

Residues 61–165 (EEMCNRLKKV…LDAIYMYDQV (105 aa)) enclose the THUMP domain. Residues 183–184 (ML), 208–209 (HF), Arg265, Gly287, and Gln296 contribute to the ATP site.

The protein belongs to the ThiI family.

It is found in the cytoplasm. The enzyme catalyses [ThiI sulfur-carrier protein]-S-sulfanyl-L-cysteine + a uridine in tRNA + 2 reduced [2Fe-2S]-[ferredoxin] + ATP + H(+) = [ThiI sulfur-carrier protein]-L-cysteine + a 4-thiouridine in tRNA + 2 oxidized [2Fe-2S]-[ferredoxin] + AMP + diphosphate. It carries out the reaction [ThiS sulfur-carrier protein]-C-terminal Gly-Gly-AMP + S-sulfanyl-L-cysteinyl-[cysteine desulfurase] + AH2 = [ThiS sulfur-carrier protein]-C-terminal-Gly-aminoethanethioate + L-cysteinyl-[cysteine desulfurase] + A + AMP + 2 H(+). It functions in the pathway cofactor biosynthesis; thiamine diphosphate biosynthesis. In terms of biological role, catalyzes the ATP-dependent transfer of a sulfur to tRNA to produce 4-thiouridine in position 8 of tRNAs, which functions as a near-UV photosensor. Also catalyzes the transfer of sulfur to the sulfur carrier protein ThiS, forming ThiS-thiocarboxylate. This is a step in the synthesis of thiazole, in the thiamine biosynthesis pathway. The sulfur is donated as persulfide by IscS. This chain is Probable tRNA sulfurtransferase, found in Staphylococcus saprophyticus subsp. saprophyticus (strain ATCC 15305 / DSM 20229 / NCIMB 8711 / NCTC 7292 / S-41).